Here is a 224-residue protein sequence, read N- to C-terminus: UPF0111 protein CT_691 (224 aa).

Belongs to the UPF0111 family.

In Chlamydia trachomatis serovar D (strain ATCC VR-885 / DSM 19411 / UW-3/Cx), this protein is UPF0111 protein CT_691.